The sequence spans 368 residues: Flap endonuclease 1 (368 aa).

Positions 1–104 (MGIHDLSKVI…GELLKRGARR (104 aa)) are N-domain. D34 serves as a coordination point for Mg(2+). Residues R47 and R70 each coordinate DNA. D86 serves as a coordination point for Mg(2+). The tract at residues 103–123 (RRKEAQANLEEATEQGDTEQM) is disordered. Residues 122–251 (QMEKFSRRLV…QKAYQLIKEH (130 aa)) are I-domain. Positions 158, 160, 179, and 181 each coordinate Mg(2+). E158 contacts DNA. DNA-binding residues include G229 and D231. D231 contacts Mg(2+). The interaction with PCNA stretch occupies residues 334–342 (QQGRLDSFF).

The protein belongs to the XPG/RAD2 endonuclease family. FEN1 subfamily. As to quaternary structure, interacts with PCNA. Three molecules of FEN1 bind to one PCNA trimer with each molecule binding to one PCNA monomer. PCNA stimulates the nuclease activity without altering cleavage specificity. Requires Mg(2+) as cofactor. In terms of processing, phosphorylated. Phosphorylation upon DNA damage induces relocalization to the nuclear plasma.

It is found in the nucleus. It localises to the nucleolus. The protein localises to the nucleoplasm. Its subcellular location is the mitochondrion. Its function is as follows. Structure-specific nuclease with 5'-flap endonuclease and 5'-3' exonuclease activities involved in DNA replication and repair. During DNA replication, cleaves the 5'-overhanging flap structure that is generated by displacement synthesis when DNA polymerase encounters the 5'-end of a downstream Okazaki fragment. It enters the flap from the 5'-end and then tracks to cleave the flap base, leaving a nick for ligation. Also involved in the long patch base excision repair (LP-BER) pathway, by cleaving within the apurinic/apyrimidinic (AP) site-terminated flap. Acts as a genome stabilization factor that prevents flaps from equilibrating into structures that lead to duplications and deletions. Also possesses 5'-3' exonuclease activity on nicked or gapped double-stranded DNA, and exhibits RNase H activity. Also involved in replication and repair of rDNA and in repairing mitochondrial DNA. This chain is Flap endonuclease 1, found in Monosiga brevicollis (Choanoflagellate).